The primary structure comprises 230 residues: Transmembrane protein 225 (230 aa).

Residues 1 to 8 (MMHIPNRS) lie on the Cytoplasmic side of the membrane. The chain crosses the membrane as a helical span at residues 9–29 (IQAANIFFSSGAILLLIVGLI). Residues 30–71 (MEDWVELIPKVRKDKTTHSPWLGCCPPFWPEESLEVVRRIMR) are Extracellular-facing. Residues 72-92 (MTLNISIYLNLIIGLQFSYMI) traverse the membrane as a helical segment. The Cytoplasmic portion of the chain corresponds to 93 to 99 (SQNKCVH). Residues 100–120 (LLVGFLSFFAGCLLFYAIIVY) form a helical membrane-spanning segment. Topologically, residues 121–139 (HHKLNKGQYVYFVNYKTKW) are extracellular. Residues 140–160 (IAFTVYLTIALFLTCGIFCFI) form a helical membrane-spanning segment. At 161–230 (QSTNRCECMK…TQARRVTWAL (70 aa)) the chain is on the cytoplasmic side. Positions 224-228 (RRVTW) match the RVxF motif.

As to quaternary structure, interacts (via RVxF motif) with PPP1CC. As to expression, expressed in testis, epididymis and spermatozoa (at protein level). Not expressed in brain, heart, lung, liver, spleen, kidney and skeletal muscle.

It localises to the cytoplasmic vesicle. The protein localises to the secretory vesicle. The protein resides in the acrosome membrane. Functionally, probably inhibits protein phosphatase 1 (PP1) in sperm via binding to catalytic subunit PPP1CC. In Mus musculus (Mouse), this protein is Transmembrane protein 225 (Tmem225).